The chain runs to 464 residues: UDP-N-acetylmuramoylalanine--D-glutamate ligase (464 aa).

112 to 118 (GTDGKTT) contacts ATP.

This sequence belongs to the MurCDEF family.

The protein resides in the cytoplasm. It carries out the reaction UDP-N-acetyl-alpha-D-muramoyl-L-alanine + D-glutamate + ATP = UDP-N-acetyl-alpha-D-muramoyl-L-alanyl-D-glutamate + ADP + phosphate + H(+). The protein operates within cell wall biogenesis; peptidoglycan biosynthesis. In terms of biological role, cell wall formation. Catalyzes the addition of glutamate to the nucleotide precursor UDP-N-acetylmuramoyl-L-alanine (UMA). This chain is UDP-N-acetylmuramoylalanine--D-glutamate ligase, found in Chlorobium chlorochromatii (strain CaD3).